We begin with the raw amino-acid sequence, 141 residues long: Large ribosomal subunit protein uL11 (141 aa).

The protein belongs to the universal ribosomal protein uL11 family. Part of the ribosomal stalk of the 50S ribosomal subunit. Interacts with L10 and the large rRNA to form the base of the stalk. L10 forms an elongated spine to which L12 dimers bind in a sequential fashion forming a multimeric L10(L12)X complex. One or more lysine residues are methylated.

Functionally, forms part of the ribosomal stalk which helps the ribosome interact with GTP-bound translation factors. The protein is Large ribosomal subunit protein uL11 of Syntrophus aciditrophicus (strain SB).